A 140-amino-acid chain; its full sequence is Fluoride-specific ion channel FluC 1 (140 aa).

3 helical membrane passes run 45–65 (IPSL…IGFL), 82–102 (FLGA…TQTI), and 106–126 (LFYG…GVFI). Na(+)-binding residues include Gly-89 and Thr-92.

Belongs to the fluoride channel Fluc/FEX (TC 1.A.43) family.

The protein resides in the cell membrane. It carries out the reaction fluoride(in) = fluoride(out). With respect to regulation, na(+) is not transported, but it plays an essential structural role and its presence is essential for fluoride channel function. Fluoride-specific ion channel. Important for reducing fluoride concentration in the cell, thus reducing its toxicity. This chain is Fluoride-specific ion channel FluC 1, found in Methanospirillum hungatei JF-1 (strain ATCC 27890 / DSM 864 / NBRC 100397 / JF-1).